Reading from the N-terminus, the 63-residue chain is Glutamine synthetase translation inhibitor (63 aa).

Functionally, inhibits the synthesis of glutamine synthetase II. The polypeptide is Glutamine synthetase translation inhibitor (gstI) (Rhizobium leguminosarum).